The following is a 414-amino-acid chain: Serine/threonine transporter SstT (414 aa).

The next 8 helical transmembrane spans lie at 16–36 (GSLV…AWIS), 46–66 (LGTL…LMLV), 84–104 (ILFL…VFSF), 143–163 (ALLN…GFAL), 180–200 (AVTF…FGLV), 219–239 (LVVL…LLVF), 300–320 (MAGA…TLGV), and 332–352 (VVAS…LLLI).

The protein belongs to the dicarboxylate/amino acid:cation symporter (DAACS) (TC 2.A.23) family.

It is found in the cell inner membrane. It carries out the reaction L-serine(in) + Na(+)(in) = L-serine(out) + Na(+)(out). It catalyses the reaction L-threonine(in) + Na(+)(in) = L-threonine(out) + Na(+)(out). Its function is as follows. Involved in the import of serine and threonine into the cell, with the concomitant import of sodium (symport system). The polypeptide is Serine/threonine transporter SstT (Salmonella agona (strain SL483)).